The primary structure comprises 147 residues: Protein disulfide isomerase-like 5-1 (147 aa).

Positions 1 to 29 (MDLAPGRRARLLVALALVVLVALAARSGA) are cleaved as a signal peptide. In terms of domain architecture, Thioredoxin spans 30-137 (EVITLTEETF…LKNFVSDEAE (108 aa)). Catalysis depends on nucleophile residues Cys-59 and Cys-62. A disulfide bridge connects residues Cys-59 and Cys-62.

Belongs to the protein disulfide isomerase family.

Acts as a protein-folding catalyst that interacts with nascent polypeptides to catalyze the formation, isomerization, and reduction or oxidation of disulfide bonds. May play a role in storage protein biogenesis. The polypeptide is Protein disulfide isomerase-like 5-1 (PDIL5-1) (Oryza sativa subsp. japonica (Rice)).